The sequence spans 384 residues: Cell division protein FtsZ (384 aa).

Residues 20–24, 107–109, E138, R142, and N186 contribute to the GTP site; these read GGGSN and GTG.

The protein belongs to the FtsZ family. As to quaternary structure, homodimer. Polymerizes to form a dynamic ring structure in a strictly GTP-dependent manner. Interacts directly with several other division proteins.

It is found in the cytoplasm. Functionally, essential cell division protein that forms a contractile ring structure (Z ring) at the future cell division site. The regulation of the ring assembly controls the timing and the location of cell division. One of the functions of the FtsZ ring is to recruit other cell division proteins to the septum to produce a new cell wall between the dividing cells. Binds GTP and shows GTPase activity. The polypeptide is Cell division protein FtsZ (Buchnera aphidicola subsp. Acyrthosiphon pisum (strain APS) (Acyrthosiphon pisum symbiotic bacterium)).